We begin with the raw amino-acid sequence, 487 residues long: MSAKEVRTRFAPSPTGYMHVGNLRTALYTYLIAKHENGKFILRIEDTDQGRYVEGAVDVIYKTLEMTGLKHDEGPDVGGPVGPYIQSERKGTYMEYAKELVEKGEAYYCFCDKERLDSLKENSDTFKYDGHCRNLSKEEVEENLKNGVPYVIRQKNPLDGVTTFEDEIYGTISVDNSELEDMILIKSDGLPTYNFANVVDDHLMGITHVVRGNEYLSSAPKYNRLYNAFGWDIPTYVHCPPIMKDAHNKLSKRNGDASFEDLLKKGYLKEAVVNFIALLGWNPGTNQEIFTLEELVKEFDYKNINKSPSIFDTTKLKWMNGEYIKKLSLDEFHKYALPYYEEIFTKEEMETYNLLKLSEQVQTRIEVFTEIPELVAFVKELPNYDISIYSHKKMKTNPENSLVTLEKALPALEALEDWTFDALNDVIYSLVKELEVKNGVVFWPVRTALSGEASSPGGAFELAEILGKKESLRRVRVGIEKLKEAIN.

The 'HIGH' region signature appears at 12-22 (PSPTGYMHVGN). The short motif at 249–253 (KLSKR) is the 'KMSKS' region element. Lys252 contributes to the ATP binding site.

This sequence belongs to the class-I aminoacyl-tRNA synthetase family. Glutamate--tRNA ligase type 1 subfamily. Monomer.

It localises to the cytoplasm. The enzyme catalyses tRNA(Glu) + L-glutamate + ATP = L-glutamyl-tRNA(Glu) + AMP + diphosphate. In terms of biological role, catalyzes the attachment of glutamate to tRNA(Glu) in a two-step reaction: glutamate is first activated by ATP to form Glu-AMP and then transferred to the acceptor end of tRNA(Glu). In Clostridium novyi (strain NT), this protein is Glutamate--tRNA ligase.